The chain runs to 685 residues: Protein SPT2 homolog (685 aa).

The important for interaction with DNA stretch occupies residues 1–570 (MDFREILMIA…PPLSGYRAAQ (570 aa)). Residue lysine 37 forms a Glycyl lysine isopeptide (Lys-Gly) (interchain with G-Cter in SUMO2) linkage. Positions 45-81 (QAFLKRKEEELRRKALEEKRRKEELVKKRIELKHDKK) form a coiled coil. The segment at 79–168 (DKKARAMAKR…PLKSAPPPMN (90 aa)) is disordered. The segment covering 101–111 (IEEKSKKRQAT) has biased composition (basic and acidic residues). The stretch at 123–148 (YEMEEENEFLEYNHAESEQEYEEEQE) forms a coiled coil. Lysine 187 is covalently cross-linked (Glycyl lysine isopeptide (Lys-Gly) (interchain with G-Cter in SUMO2)). 2 stretches are compositionally biased toward basic and acidic residues: residues 188 to 209 (VVKKSEERPMTAEELREREFLE) and 260 to 275 (HAEKKSRPSMANEKHL). Disordered stretches follow at residues 188-615 (VVKK…QEEI) and 644-685 (SWKE…LKRR). Serine 278 carries the phosphoserine modification. Composition is skewed to low complexity over residues 317–330 (SSTSSPSVPKTSAS), 365–385 (SPGVRQPGSSSSSAPGQPSTG), and 402–415 (GSSSSGPERSISGS). A compositionally biased stretch (polar residues) spans 416 to 431 (KKPTNDSNPSRRTVSG). The segment covering 435–501 (PGQPASSSGG…PGRSISGSIP (67 aa)) has biased composition (low complexity). Phosphoserine is present on serine 471. Positions 519 to 529 (GPGQTVSSSGP) are enriched in polar residues. Over residues 542-553 (ISSKNIISRSSN) the composition is skewed to low complexity. Residues 571-685 (GPQRLPFPTG…RRRAKKLKRR (115 aa)) form an important for interaction with histones region. The residue at position 582 (lysine 582) is an N6-acetyllysine. Over residues 587–613 (YEEEDDDDDEYDSEMEDFIEDEGEPQE) the composition is skewed to acidic residues. The residue at position 599 (serine 599) is a Phosphoserine. 2 stretches are compositionally biased toward basic and acidic residues: residues 644-655 (SWKEQQKEEAKS) and 666-676 (EMRREEEEMQR). Residues 645–685 (WKEQQKEEAKSLRLGMQEDLEEMRREEEEMQRRRAKKLKRR) adopt a coiled-coil conformation.

Belongs to the SPT2 family. As to quaternary structure, interacts with histones. Interacts with a heterotetrameric complex formed by histone H3 and H4, especially when the histone tetramer is not bound to DNA. Interacts with histone H3.3.

The protein resides in the nucleus. It localises to the nucleolus. Its function is as follows. Histone chaperone that stabilizes pre-existing histone tetramers and regulates replication-independent histone exchange on chromatin. Required for normal chromatin refolding in the coding region of transcribed genes, and for the suppression of spurious transcription. Binds DNA and histones and promotes nucleosome assembly (in vitro). Facilitates formation of tetrameric histone complexes containing histone H3 and H4. Modulates RNA polymerase 1-mediated transcription. Binds DNA, with a preference for branched DNA species, such as Y-form DNA and Holliday junction DNA. The polypeptide is Protein SPT2 homolog (SPTY2D1) (Homo sapiens (Human)).